We begin with the raw amino-acid sequence, 577 residues long: MVQSAPASEIAALILRGFDDYREQFREITDGARARFEQAQWQEAQRASTQRINLYEEKVAETVAGLRVGLADSELLDVERWPIIKSAYIAQIDLRLDDELAETWFNSIFCGLFSHDNISDGTMFVHTTRPSLRAHARAPYTRTYRPGGDLRQALEKIFDDYRFDVPYDDRERDLERIDALLHSNLPDWVCKDPDLAIELIGSVFYRNKGAYLVGRLFTPDEQWPLVFPLLHREGHGIQFDTVITDEAEVSIIFSFTRSYFMVDVPVPAELVAFLKRLLPGKHLAELYTSIGFYKQGKSEFYRALINHLATTDDRFVMAPGVRGMVMSVFTLPGFNTVFKIIKDRFNPSKSVDHATVIQKYQLVKNHDRVGRLADTQQFADFRFPVSKFEPECLAELLEVAPSTVVMEGDVVLIRHCWTERRMTPLNIYLENASEAQTREALNDYGLAIKQLAAANIFPGDMLLKNFGVTRHGRVVFYDYDEICYLTEVNFRYIPEPRFPEDEMSSEPWYSVGPNDVFPEEFPRFLFVDLNQRRLFAKLHGNLYDAKYWQGLQEQIREGKVIDVFPYRRQETPEQLLG.

ATP contacts are provided by residues 318–324 and lysine 339; that span reads APGVRGM. The active site involves aspartate 374.

It belongs to the AceK family.

It localises to the cytoplasm. It carries out the reaction L-seryl-[isocitrate dehydrogenase] + ATP = O-phospho-L-seryl-[isocitrate dehydrogenase] + ADP + H(+). In terms of biological role, bifunctional enzyme which can phosphorylate or dephosphorylate isocitrate dehydrogenase (IDH) on a specific serine residue. This is a regulatory mechanism which enables bacteria to bypass the Krebs cycle via the glyoxylate shunt in response to the source of carbon. When bacteria are grown on glucose, IDH is fully active and unphosphorylated, but when grown on acetate or ethanol, the activity of IDH declines drastically concomitant with its phosphorylation. In Pseudomonas aeruginosa (strain UCBPP-PA14), this protein is Isocitrate dehydrogenase kinase/phosphatase.